The chain runs to 126 residues: Fluoride-specific ion channel FluC (126 aa).

The next 4 helical transmembrane spans lie at 5-25 (FILA…LVGI), 39-59 (TLFI…LFAV), 69-89 (IFLV…SLDT), and 103-123 (AYMI…IQIV). 2 residues coordinate Na(+): Gly77 and Thr80.

It belongs to the fluoride channel Fluc/FEX (TC 1.A.43) family.

It localises to the cell inner membrane. The enzyme catalyses fluoride(in) = fluoride(out). Its activity is regulated as follows. Na(+) is not transported, but it plays an essential structural role and its presence is essential for fluoride channel function. Its function is as follows. Fluoride-specific ion channel. Important for reducing fluoride concentration in the cell, thus reducing its toxicity. This is Fluoride-specific ion channel FluC from Nitrobacter winogradskyi (strain ATCC 25391 / DSM 10237 / CIP 104748 / NCIMB 11846 / Nb-255).